Reading from the N-terminus, the 167-residue chain is HTH-type transcriptional repressor YetL (167 aa).

One can recognise an HTH marR-type domain in the interval Ser26–Glu160. The H-T-H motif DNA-binding region spans Pro74–Arg97.

Homodimer. The N- and C-terminal helices from both subunits stabilize YetL dimer via extensive intersubunit interactions.

Binding to the yetM cis sequence is clearly inhibited by kaempferol, morin, apigenin and luteolin, slightly inhibited by quercetin and galangin, but no inhibition is observed with the other flavonoids. Flavonoid binding may induce conformational changes and modulate interaction with DNA. Functionally, negatively regulates yetM expression and its own expression. Binds specifically to corresponding single sites in the divergent yetL and yetM promoter regions, with higher affinity to the yetM region. Recognizes a 28-mer operator of double-stranded DNA that contains a palindromic sequence. This Bacillus subtilis (strain 168) protein is HTH-type transcriptional repressor YetL (yetL).